Here is a 230-residue protein sequence, read N- to C-terminus: Ribose-5-phosphate isomerase A (230 aa).

Residues 32-35 (TGST), 85-88 (DGAD), and 98-101 (KGGG) contribute to the substrate site. The active-site Proton acceptor is the Glu107. Lys125 contacts substrate.

It belongs to the ribose 5-phosphate isomerase family. As to quaternary structure, homodimer.

The catalysed reaction is aldehydo-D-ribose 5-phosphate = D-ribulose 5-phosphate. The protein operates within carbohydrate degradation; pentose phosphate pathway; D-ribose 5-phosphate from D-ribulose 5-phosphate (non-oxidative stage): step 1/1. Catalyzes the reversible conversion of ribose-5-phosphate to ribulose 5-phosphate. The chain is Ribose-5-phosphate isomerase A from Burkholderia ambifaria (strain ATCC BAA-244 / DSM 16087 / CCUG 44356 / LMG 19182 / AMMD) (Burkholderia cepacia (strain AMMD)).